We begin with the raw amino-acid sequence, 374 residues long: WAT1-related protein At1g60050 (374 aa).

The next 10 membrane-spanning stretches (helical) occupy residues 11 to 31, 42 to 62, 82 to 102, 107 to 127, 145 to 165, 194 to 214, 228 to 248, 255 to 275, 292 to 312, and 315 to 335; these read IVPF…TILA, FVFI…YSFY, IFLL…LGLS, IVVC…SLAL, IGTL…GPFI, WALG…WNII, VVSA…AFME, ELKL…GSII, VPLF…SFFV, and LHYG…LIMW. An EamA domain is found at 26 to 155; it reads ALTILAKTAL…GTLICFTGAF (130 aa).

The protein belongs to the drug/metabolite transporter (DMT) superfamily. Plant drug/metabolite exporter (P-DME) (TC 2.A.7.4) family.

The protein localises to the membrane. The protein is WAT1-related protein At1g60050 of Arabidopsis thaliana (Mouse-ear cress).